Consider the following 135-residue polypeptide: Large ribosomal subunit protein uL16m (135 aa).

It belongs to the universal ribosomal protein uL16 family.

The protein resides in the mitochondrion. This is Large ribosomal subunit protein uL16m (RPL16) from Marchantia polymorpha (Common liverwort).